A 409-amino-acid chain; its full sequence is Immunity-related GTPase family M protein 1 (409 aa).

One can recognise an IRG-type G domain in the interval 75–251 (IPVSIFVTGD…PKLRDTLHKD (177 aa)). GTP contacts are provided by residues 84–91 (DSGNGMSS), 109–113 (TGVVR), and 191–193 (KLD). Ser-202 bears the Phosphoserine mark. A GTP-binding site is contributed by 232–234 (SSL). Residue Lys-270 forms a Glycyl lysine isopeptide (Lys-Gly) (interchain with G-Cter in ubiquitin) linkage. An alpha-K amphipathic helix region spans residues 350–374 (KLRLMTCAIVNAFFRLLRFLPCVCC).

The protein belongs to the TRAFAC class dynamin-like GTPase superfamily. IRG family. Interacts with ULK1; promoting the coassembly of ULK1 and BECN1. Interacts with BECN1; enhancing BECN1-interacting partners and influencing the composition of the BECN1 complex. Interacts with ATG16L1. Interacts with NOD2; promoting Irgm1 'Lys-63'-linked polyubiquitination, which is required for interactions with the core autophagy factors. Interacts with STX17; promoting STX17 recruitment to autophagosomes. Interacts with ATG8 proteins (GABARAP, GABARAPL1, GABARAPL2, MAP1LC3A, MAP1LC3B and MAP1LC3C); promoting STX17 recruitment to autophagosomes. Interacts with TFEB; promoting association between TFEB and PPP3CB and TFEB dephosphorylation. Interacts with PPP3CB; promoting association between TFEB and PPP3CB and TFEB dephosphorylation. Interacts with NLRP3; preventing NLRP3 inflammasome assembly and promoting SQSTM1/p62-dependent autophagic degradation of NLRP3. Interacts with CGAS; promoting SQSTM1/p62-dependent autophagic degradation of CGAS. Interacts with RIGI/RIG-I; promoting SQSTM1/p62-dependent autophagic degradation of RIGI/RIG-I. Interacts with NOD1; promoting SQSTM1/p62-dependent autophagic degradation of RIGI/RIG-I. Interacts with NOD2; promoting SQSTM1/p62-dependent autophagic degradation of RIGI/RIG-I. Interacts with RIPK2; promoting SQSTM1/p62-dependent autophagic degradation of RIGI/RIG-I. Interacts with PIK3CA. Post-translationally, palmitoylated on C-terminal Cys residues. Palmitoylation, together with the alpha-K amphipathic helix, which binds phosphatidylinositol, mediate binding to membranes. In terms of processing, ubiquitinated via 'Lys-63'-linked polyubiquitination in a NOD2-dependent process. 'Lys-63'-linked polyubiquitination is required for interactions with the core autophagy factors. Ubiquitination at Lys-270 by the DCX(WDR77) complex, also named CLR4(WDR77) complex, in intestinal cells, leading to its degradation by the proteasome. Expressed in lung and primary macrophages.

The protein localises to the golgi apparatus membrane. It is found in the cell membrane. Its subcellular location is the cytoplasmic vesicle. It localises to the phagosome membrane. The protein resides in the autophagosome membrane. The protein localises to the lysosome membrane. It is found in the late endosome membrane. Its subcellular location is the mitochondrion membrane. It localises to the lipid droplet. The protein resides in the cell projection. The protein localises to the phagocytic cup. The catalysed reaction is GTP + H2O = GDP + phosphate + H(+). Functionally, immunity-related GTPase that plays important roles in innate immunity and inflammatory response. Acts as a dynamin-like protein that binds to intracellular membranes and promotes remodeling and trafficking of those membranes. Required for clearance of acute protozoan and bacterial infections by interacting with autophagy and lysosome regulatory proteins, thereby promoting the fusion of phagosomes with lysosomes for efficient degradation of cargo including microbes. Regulates selective autophagy, including xenophagy and mitophagy, both directly and indirectly. Directly regulates autophagy by acting as a molecular adapter that promotes the coassembly of the core autophagy machinery to mediate antimicrobial defense: Irgm1 (1) activates AMPK, which in turn phosphorylates ULK1 and BECN1 to induce autophagy, (2) promotes the coassembly of ULK1 and BECN1, enhancing BECN1-interacting partners and (3) influences the composition of the BECN1 complex, by competing with the negative regulators BCL2 and RUBCN, to trigger autophagy. Also activates autophagy by promoting recruitment of STX17 to autophagosomes. In collaboration with ATG8 proteins, regulate lysosomal biogenesis, a fundamental process for any autophagic pathway, by promoting TFEB dephosphorylation. Also modulates autophagy by assisting with autophagosome formation and preventing lysosomal deacidification. Regulates autophagy by affecting mitochondrial fusion and fission. Also involved in M1 macrophage activation for the production of proinflammatory cytokines. While activating autophagy, acts as a key negative regulator of the inflammatory and interferon responses both by (1) promoting mitophagy and (2) mediating autophagy-dependent degradation of effectors of the inflammatory response. Promotes degradation of damaged and IFNG/IFN-gamma-stressed mitochondria via mitophagy, preventing cytosolic release of ligands that activate inflammation. Negatively regulates interferon-signaling in hematopoietic stem cells, preserving hematopoietic stem cell number and function. Promotes expansion of activated CD4(+) T-cells by inhibiting IFNG/IFN-gamma signaling, thereby preventing Ifng-mediated cell death of CD4(+) T-cells. Acts as a suppressor of inflammation by promoting recruitment of inflammation effectors, such as CGAS, RIGI/RIG-I and NLRP3, to autophagosome membranes, leading to their SQSTM1/p62-dependent autophagic degradation. Also directly inhibits assembly of the NLRP3 inflammasome by preventing the association between NLRP3 and PYCARD. Acts as a negative regulator of antiviral innate immune response by suppressing the RIPK2-dependent pro-inflammatory response: mediates recruitment of RIPosomes, composed of RIPK2 and NOD1 or NOD2, to autophagosome membranes, promoting their SQSTM1/p62-dependent autophagic degradation. The chain is Immunity-related GTPase family M protein 1 from Mus musculus (Mouse).